Consider the following 384-residue polypeptide: PqqA peptide cyclase (384 aa).

One can recognise a Radical SAM core domain in the interval P15–E231. Residues C29, C33, and C36 each coordinate [4Fe-4S] cluster.

Belongs to the radical SAM superfamily. PqqE family. Interacts with PqqD. The interaction is necessary for activity of PqqE. The cofactor is [4Fe-4S] cluster.

It carries out the reaction [PQQ precursor protein] + S-adenosyl-L-methionine = E-Y cross-linked-[PQQ precursor protein] + 5'-deoxyadenosine + L-methionine + H(+). It participates in cofactor biosynthesis; pyrroloquinoline quinone biosynthesis. In terms of biological role, catalyzes the cross-linking of a glutamate residue and a tyrosine residue in the PqqA protein as part of the biosynthesis of pyrroloquinoline quinone (PQQ). This is PqqA peptide cyclase from Ectopseudomonas mendocina (strain ymp) (Pseudomonas mendocina).